Consider the following 199-residue polypeptide: Protein Thf1 (199 aa).

Residues 167-198 (QYSRVEKDISMYKSNIEKMKQALEIIALNLKT) adopt a coiled-coil conformation.

This sequence belongs to the THF1 family.

Its function is as follows. May be involved in photosynthetic membrane biogenesis. The chain is Protein Thf1 from Prochlorococcus marinus (strain NATL1A).